The following is a 104-amino-acid chain: UPF0235 protein Sfri_2863 (104 aa).

This sequence belongs to the UPF0235 family.

The chain is UPF0235 protein Sfri_2863 from Shewanella frigidimarina (strain NCIMB 400).